Reading from the N-terminus, the 419-residue chain is Arginine biosynthesis bifunctional protein ArgJ (419 aa).

Threonine 154, lysine 180, threonine 191, glutamate 277, asparagine 414, and threonine 419 together coordinate substrate. Threonine 191 (nucleophile) is an active-site residue.

This sequence belongs to the ArgJ family. Heterotetramer of two alpha and two beta chains.

It is found in the cytoplasm. The enzyme catalyses N(2)-acetyl-L-ornithine + L-glutamate = N-acetyl-L-glutamate + L-ornithine. It catalyses the reaction L-glutamate + acetyl-CoA = N-acetyl-L-glutamate + CoA + H(+). It functions in the pathway amino-acid biosynthesis; L-arginine biosynthesis; L-ornithine and N-acetyl-L-glutamate from L-glutamate and N(2)-acetyl-L-ornithine (cyclic): step 1/1. The protein operates within amino-acid biosynthesis; L-arginine biosynthesis; N(2)-acetyl-L-ornithine from L-glutamate: step 1/4. Functionally, catalyzes two activities which are involved in the cyclic version of arginine biosynthesis: the synthesis of N-acetylglutamate from glutamate and acetyl-CoA as the acetyl donor, and of ornithine by transacetylation between N(2)-acetylornithine and glutamate. This chain is Arginine biosynthesis bifunctional protein ArgJ, found in Thermosynechococcus vestitus (strain NIES-2133 / IAM M-273 / BP-1).